We begin with the raw amino-acid sequence, 383 residues long: ATP phosphoribosyltransferase regulatory subunit (383 aa).

It belongs to the class-II aminoacyl-tRNA synthetase family. HisZ subfamily. Heteromultimer composed of HisG and HisZ subunits.

The protein localises to the cytoplasm. It functions in the pathway amino-acid biosynthesis; L-histidine biosynthesis; L-histidine from 5-phospho-alpha-D-ribose 1-diphosphate: step 1/9. Required for the first step of histidine biosynthesis. May allow the feedback regulation of ATP phosphoribosyltransferase activity by histidine. This is ATP phosphoribosyltransferase regulatory subunit from Cupriavidus metallidurans (strain ATCC 43123 / DSM 2839 / NBRC 102507 / CH34) (Ralstonia metallidurans).